The chain runs to 94 residues: Pyrimidine/purine nucleoside phosphorylase (94 aa).

The protein belongs to the nucleoside phosphorylase PpnP family.

It carries out the reaction a purine D-ribonucleoside + phosphate = a purine nucleobase + alpha-D-ribose 1-phosphate. The catalysed reaction is adenosine + phosphate = alpha-D-ribose 1-phosphate + adenine. It catalyses the reaction cytidine + phosphate = cytosine + alpha-D-ribose 1-phosphate. The enzyme catalyses guanosine + phosphate = alpha-D-ribose 1-phosphate + guanine. It carries out the reaction inosine + phosphate = alpha-D-ribose 1-phosphate + hypoxanthine. The catalysed reaction is thymidine + phosphate = 2-deoxy-alpha-D-ribose 1-phosphate + thymine. It catalyses the reaction uridine + phosphate = alpha-D-ribose 1-phosphate + uracil. The enzyme catalyses xanthosine + phosphate = alpha-D-ribose 1-phosphate + xanthine. Catalyzes the phosphorolysis of diverse nucleosides, yielding D-ribose 1-phosphate and the respective free bases. Can use uridine, adenosine, guanosine, cytidine, thymidine, inosine and xanthosine as substrates. Also catalyzes the reverse reactions. This chain is Pyrimidine/purine nucleoside phosphorylase, found in Escherichia fergusonii (strain ATCC 35469 / DSM 13698 / CCUG 18766 / IAM 14443 / JCM 21226 / LMG 7866 / NBRC 102419 / NCTC 12128 / CDC 0568-73).